The following is a 343-amino-acid chain: ELAV-like protein 3 (343 aa).

RRM domains are found at residues 35 to 113 (TNLI…YARP), 121 to 202 (ANLY…FANN), and 260 to 338 (WCIF…FKTS).

It belongs to the RRM elav family.

Its function is as follows. RNA-binding protein that binds to AU-rich sequences (AREs) of target mRNAs. May also bind poly-A tracts via RRM 3. May be involved in neuronal differentiation and maintenance. The polypeptide is ELAV-like protein 3 (Xenopus tropicalis (Western clawed frog)).